The following is a 180-amino-acid chain: UPF0227 protein CKO_01948 (180 aa).

Belongs to the UPF0227 family.

The sequence is that of UPF0227 protein CKO_01948 from Citrobacter koseri (strain ATCC BAA-895 / CDC 4225-83 / SGSC4696).